The primary structure comprises 339 residues: 4-hydroxy-2-oxovalerate aldolase (339 aa).

A Pyruvate carboxyltransferase domain is found at 7 to 257 (IRIMDTTLRD…QVGVDLYKIM (251 aa)). 15-16 (RD) is a substrate binding site. Position 16 (Asp-16) interacts with Mn(2+). Catalysis depends on His-19, which acts as the Proton acceptor. Residues Ser-169 and His-196 each coordinate substrate. Mn(2+) is bound by residues His-196 and His-198. Substrate is bound at residue Tyr-286.

It belongs to the 4-hydroxy-2-oxovalerate aldolase family.

It catalyses the reaction (S)-4-hydroxy-2-oxopentanoate = acetaldehyde + pyruvate. The chain is 4-hydroxy-2-oxovalerate aldolase from Pelotomaculum thermopropionicum (strain DSM 13744 / JCM 10971 / SI).